Here is an 872-residue protein sequence, read N- to C-terminus: Cellulose synthase catalytic subunit [UDP-forming] (872 aa).

4 helical membrane passes run 30 to 50 (SAFSATLGCFWMILAWIFIPL), 151 to 171 (ILGIIVTFSLILALICVTQPF), 173 to 193 (PLAQFIFLMLLWGVALIVRRM), and 230 to 250 (LVCGLILLFAETYAWIVLVLG). Residues 271 to 364 (LWPSVDIFVP…FVSIFDCDHV (94 aa)) form a catalytic subdomain A region. Residue Asp313 is part of the active site. The substrate site is built by Asp360 and Asp362. Positions 441–501 (KPLDEIGGIA…GQRIRWARGM (61 aa)) are catalytic subdomain B. Residue Asp457 is part of the active site. 5 helical membrane-spanning segments follow: residues 525-545 (VNAMFHFLSGIPRLIFLTAPL), 547-567 (FLLLHAYIIYAPALMIALFVL), 592-612 (IYETVLAWYIAPPTLVALINP), 640-660 (IFLVLLNLVGVAVGIWRYFYG), and 668-688 (VVVSMVWVFYNLIVLGGAVAV). Residues 694–790 (QVRRSHRVEM…QHIDFVQCTF (97 aa)) form the PilZ domain. Residues 833-853 (SVKGIFRVLTSLVSWVVSFIP) traverse the membrane as a helical segment.

Belongs to the glycosyltransferase 2 family. It depends on Mg(2+) as a cofactor.

The protein resides in the cell inner membrane. It catalyses the reaction [(1-&gt;4)-beta-D-glucosyl](n) + UDP-alpha-D-glucose = [(1-&gt;4)-beta-D-glucosyl](n+1) + UDP + H(+). It participates in glycan metabolism; bacterial cellulose biosynthesis. With respect to regulation, activated by bis-(3'-5') cyclic diguanylic acid (c-di-GMP). In terms of biological role, catalytic subunit of cellulose synthase. It polymerizes uridine 5'-diphosphate glucose to cellulose, which is produced as an extracellular component for mechanical and chemical protection at the onset of the stationary phase, when the cells exhibit multicellular behavior (rdar morphotype). Coexpression of cellulose and thin aggregative fimbriae (curli fimbrae or fibers) leads to a hydrophobic network with tightly packed cells embedded in a highly inert matrix that confers cohesion, elasticity and tissue-like properties to colonies. This chain is Cellulose synthase catalytic subunit [UDP-forming] (bcsA), found in Escherichia coli (strain K12).